Reading from the N-terminus, the 341-residue chain is tRNA N6-adenosine threonylcarbamoyltransferase (341 aa).

The Fe cation site is built by His-112 and His-116. Residues 138–142 (TVSGG), Asp-171, Gly-184, Asp-188, and Asn-279 contribute to the substrate site. Position 307 (Asp-307) interacts with Fe cation.

This sequence belongs to the KAE1 / TsaD family. Requires Fe(2+) as cofactor.

The protein resides in the cytoplasm. It carries out the reaction L-threonylcarbamoyladenylate + adenosine(37) in tRNA = N(6)-L-threonylcarbamoyladenosine(37) in tRNA + AMP + H(+). Its function is as follows. Required for the formation of a threonylcarbamoyl group on adenosine at position 37 (t(6)A37) in tRNAs that read codons beginning with adenine. Is involved in the transfer of the threonylcarbamoyl moiety of threonylcarbamoyl-AMP (TC-AMP) to the N6 group of A37, together with TsaE and TsaB. TsaD likely plays a direct catalytic role in this reaction. The sequence is that of tRNA N6-adenosine threonylcarbamoyltransferase from Riemerella anatipestifer (Moraxella anatipestifer).